The primary structure comprises 357 residues: Selenide, water dikinase (357 aa).

Cys-25 is a catalytic residue. ATP-binding positions include Lys-28 and 57 to 59 (TAD). Position 60 (Asp-60) interacts with Mg(2+). Residues Asp-77, Asp-100, and 148-150 (GHS) contribute to the ATP site. Position 100 (Asp-100) interacts with Mg(2+). Asp-236 contributes to the Mg(2+) binding site.

The protein belongs to the selenophosphate synthase 1 family. Class I subfamily. In terms of assembly, homodimer. Requires Mg(2+) as cofactor.

It carries out the reaction hydrogenselenide + ATP + H2O = selenophosphate + AMP + phosphate + 2 H(+). In terms of biological role, synthesizes selenophosphate from selenide and ATP. This chain is Selenide, water dikinase, found in Pseudomonas straminea.